A 259-amino-acid polypeptide reads, in one-letter code: Src-like-adapter 2 (259 aa).

The span at 1–20 (MGSLSSRGKTSSPSPSSSGP) shows a compositional bias: low complexity. The tract at residues 1–30 (MGSLSSRGKTSSPSPSSSGPDQEPVSMQPE) is disordered. Gly2 is lipidated: N-myristoyl glycine. The SH3 domain maps to 31–91 (RHKVTAVALG…PSVYVAKVAH (61 aa)). The SH2 domain maps to 93–190 (WLYEGLSREK…GICCPLREPC (98 aa)). The interval 190-259 (CVLQKLGPLP…SLAEDPLDDA (70 aa)) is SLA C-terminal.

Interacts (via its C-terminal domain) with CBL (phosphorylated). Interacts (via SH2 domain) with ZAP70 (phosphorylated) and CD3Z (phosphorylated). Interacts (via SH2 domain) with CSF1R (phosphorylated). In terms of processing, phosphorylated by CSF1R. As to expression, mainly expressed in immune system. Highly expressed in spleen and thymus and expressed at intermediate levels in lung. Not expressed in liver, heart and brain. Isoform 1 is predominant in lung and spleen, while isoform 2 is predominant in thymus.

It is found in the cytoplasm. It localises to the cell membrane. The protein localises to the cytoplasmic vesicle. Its subcellular location is the late endosome. Adapter protein, which negatively regulates T-cell receptor (TCR) signaling. Inhibits T-cell antigen-receptor induced activation of nuclear factor of activated T-cells. May act by linking signaling proteins such as ZAP70 with CBL, leading to a CBL dependent degradation of signaling proteins. This is Src-like-adapter 2 (Sla2) from Mus musculus (Mouse).